The primary structure comprises 390 residues: LL-diaminopimelate aminotransferase 2 (390 aa).

Residues Tyr-13 and Gly-38 each coordinate substrate. Residues Tyr-67, 102 to 103 (SK), Tyr-127, Asn-177, Tyr-208, and 236 to 238 (SLS) each bind pyridoxal 5'-phosphate. Substrate is bound by residues Lys-103, Tyr-127, and Asn-177. Lys-239 is modified (N6-(pyridoxal phosphate)lysine). Pyridoxal 5'-phosphate is bound at residue Arg-247. Position 365 (Arg-365) interacts with substrate.

Belongs to the class-I pyridoxal-phosphate-dependent aminotransferase family. LL-diaminopimelate aminotransferase subfamily. Homodimer. It depends on pyridoxal 5'-phosphate as a cofactor.

It carries out the reaction (2S,6S)-2,6-diaminopimelate + 2-oxoglutarate = (S)-2,3,4,5-tetrahydrodipicolinate + L-glutamate + H2O + H(+). Its pathway is amino-acid biosynthesis; L-lysine biosynthesis via DAP pathway; LL-2,6-diaminopimelate from (S)-tetrahydrodipicolinate (aminotransferase route): step 1/1. Functionally, involved in the synthesis of meso-diaminopimelate (m-DAP or DL-DAP), required for both lysine and peptidoglycan biosynthesis. Catalyzes the direct conversion of tetrahydrodipicolinate to LL-diaminopimelate. In Trichormus variabilis (strain ATCC 29413 / PCC 7937) (Anabaena variabilis), this protein is LL-diaminopimelate aminotransferase 2.